A 144-amino-acid polypeptide reads, in one-letter code: Virulence protein STM3117 (144 aa).

A VOC domain is found at 23–143; that stretch reads RIDHLVLTVS…DGNLIEISQY (121 aa).

Is critically involved in promoting the replication of S.typhimurium cells inside host macrophages, suggesting a role in the establishment of bacterial colonization within macrophages. May be involved in the biosynthesis and modification of the peptidoglycan layer of the cell wall. This is Virulence protein STM3117 from Salmonella typhimurium (strain LT2 / SGSC1412 / ATCC 700720).